A 147-amino-acid chain; its full sequence is Low molecular weight protein-tyrosine-phosphatase Wzb (147 aa).

Residue cysteine 9 is the Nucleophile of the active site. Arginine 15 is a catalytic residue. The active-site Proton donor is the aspartate 115.

The protein belongs to the low molecular weight phosphotyrosine protein phosphatase family.

It catalyses the reaction O-phospho-L-tyrosyl-[protein] + H2O = L-tyrosyl-[protein] + phosphate. Its pathway is glycan metabolism; exopolysaccharide biosynthesis. Functionally, dephosphorylates Wzc. Required for the extracellular polysaccharide colanic acid synthesis. Probably involved in the export of colanic acid from the cell to medium. Involved in protection of cells against contact-dependent growth inhibition (CDI). The chain is Low molecular weight protein-tyrosine-phosphatase Wzb (wzb) from Escherichia coli O157:H7.